Reading from the N-terminus, the 76-residue chain is MAKIVRIKGEIIGKDEPMVFTKEYNVVKEDDALETMYSEMGSKHAVKRANIKVVEISEISEEDIQNPILKKTLEMY.

The protein belongs to the eukaryotic ribosomal protein eL20 family. As to quaternary structure, part of the 50S ribosomal subunit. Binds 23S rRNA.

This Methanococcus maripaludis (strain C5 / ATCC BAA-1333) protein is Large ribosomal subunit protein eL20.